A 372-amino-acid chain; its full sequence is NADH-quinone oxidoreductase subunit H (372 aa).

Transmembrane regions (helical) follow at residues 34-54 (LPLG…LYAL), 106-126 (FLFV…FAVL), 139-159 (VGLF…LAAG), 178-198 (IVSY…MAGT), 217-237 (FFLF…IASL), 269-289 (VIFL…AIVF), 313-333 (VWGA…QMWL), and 352-372 (VLTP…IYVP).

Belongs to the complex I subunit 1 family. As to quaternary structure, NDH-1 is composed of 14 different subunits. Subunits NuoA, H, J, K, L, M, N constitute the membrane sector of the complex.

Its subcellular location is the cell inner membrane. The catalysed reaction is a quinone + NADH + 5 H(+)(in) = a quinol + NAD(+) + 4 H(+)(out). Functionally, NDH-1 shuttles electrons from NADH, via FMN and iron-sulfur (Fe-S) centers, to quinones in the respiratory chain. The immediate electron acceptor for the enzyme in this species is believed to be ubiquinone. Couples the redox reaction to proton translocation (for every two electrons transferred, four hydrogen ions are translocated across the cytoplasmic membrane), and thus conserves the redox energy in a proton gradient. This subunit may bind ubiquinone. The chain is NADH-quinone oxidoreductase subunit H from Chlorobium luteolum (strain DSM 273 / BCRC 81028 / 2530) (Pelodictyon luteolum).